The following is a 64-amino-acid chain: Large ribosomal subunit protein bL35 (64 aa).

This sequence belongs to the bacterial ribosomal protein bL35 family.

The sequence is that of Large ribosomal subunit protein bL35 from Alcanivorax borkumensis (strain ATCC 700651 / DSM 11573 / NCIMB 13689 / SK2).